A 534-amino-acid chain; its full sequence is Importin subunit alpha-1b (534 aa).

Positions 1–58 (MSLRPSERAEVRRSRYKVAVDADEGRRRREDNMVEIRKSRREESLLKKRRDGLPAAAA) constitute an IBB domain. 8 ARM repeats span residues 111-151 (SPPI…NIAS), 154-193 (SDNT…NVAG), 196-236 (PKCR…NFCR), 238-277 (KPQP…YLSD), 280-319 (NDKI…NIVT), 322-362 (DMQT…NITA), 365-404 (REQI…NATS), and 408-447 (HDQI…NILK). A disordered region spans residues 505–534 (DAMPSGDNAQNGFNFGNQQPNVPSGGFNFG). Residues 514–523 (QNGFNFGNQQ) show a composition bias toward low complexity.

The protein belongs to the importin alpha family. Forms a complex with importin subunit beta-1. The whole complex, most stable and composed of importin alpha and importin beta, is referred to as PTAC or pore targeting complex. As to expression, highly expressed in root and weakly in callus, etiolated leaf and green leaf.

It is found in the cytoplasm. Its subcellular location is the perinuclear region. In terms of biological role, functions in nuclear protein import. Binds specifically and directly to substrates containing either a simple or bipartite NLS motif. Promotes docking of import substrates to the nuclear envelope. In conjunction with importin beta-1, mediates the nuclear envelope docking, and the subsequent translocation into the nucleus of the constitutive morphogenetic 1 (COP1) protein containing bipartite NLS motif. In Oryza sativa subsp. japonica (Rice), this protein is Importin subunit alpha-1b.